A 541-amino-acid polypeptide reads, in one-letter code: Putative transferase YhbX (541 aa).

At 1 to 60 (MTVFNKFARTFKSHWLLYLCVIVFGITNLVASSGAHMVQRLLFFVLTILVVKRISSLPLR) the chain is on the periplasmic side. The helical transmembrane segment at 61 to 81 (LLVAAPFVLLTAADMSISLYS) threads the bilayer. Over 82-110 (WCTFGTTFNDGFAISVLQSDPDEVVKMLG) the chain is Cytoplasmic. The chain crosses the membrane as a helical span at residues 111–131 (MYIPYLCAFAFLSLLFLAVII). Residues 132-141 (KYDVSLPTKK) are Periplasmic-facing. Residues 142 to 162 (VTGILLLIVISGSLFSACQFA) form a helical membrane-spanning segment. At 163–264 (YKDAKNKKAF…RKQIKLFNQA (102 aa)) the chain is on the cytoplasmic side. The helical transmembrane segment at 265–285 (ISGAPYTALSVPLSLTADSVL) threads the bilayer. Residues 286-541 (SHDIHNYPDN…QGNPTPEGQG (256 aa)) lie on the Periplasmic side of the membrane.

This sequence belongs to the phosphoethanolamine transferase family.

The protein localises to the cell inner membrane. Probably does not transfer phosphoethanolamine to lipid A. This is Putative transferase YhbX (yhbX) from Escherichia coli (strain K12).